The primary structure comprises 580 residues: Acyl-coenzyme A synthetase ACSM3, mitochondrial (580 aa).

A mitochondrion-targeting transit peptide spans 1–21 (MVMLLRARCFQRLAIPDPMRV). N6-succinyllysine is present on residues Lys67 and Lys100. Position 151 is an N6-acetyllysine (Lys151). ATP-binding positions include 229-237 (TSGTTGPPK), 368-373 (EGYGQT), Asp455, Arg470, and Lys566.

Belongs to the ATP-dependent AMP-binding enzyme family. The cofactor is Mg(2+). Mn(2+) is required as a cofactor. In terms of tissue distribution, detected in kidney (at protein level). Detected in kidney proximal tubules and in liver. Detected at low levels in testis, stomach, heart and lung.

It is found in the mitochondrion. Its subcellular location is the mitochondrion matrix. The enzyme catalyses a medium-chain fatty acid + ATP + CoA = a medium-chain fatty acyl-CoA + AMP + diphosphate. The catalysed reaction is propanoate + ATP + CoA = propanoyl-CoA + AMP + diphosphate. It catalyses the reaction butanoate + ATP + CoA = butanoyl-CoA + AMP + diphosphate. It carries out the reaction 2-methylpropanoate + ATP + CoA = 2-methylpropanoyl-CoA + AMP + diphosphate. The enzyme catalyses 2-methylbutanoate + ATP + CoA = 2-methylbutanoyl-CoA + AMP + diphosphate. The catalysed reaction is octanoate + ATP + CoA = octanoyl-CoA + AMP + diphosphate. In terms of biological role, catalyzes the activation of fatty acids by CoA to produce an acyl-CoA, the first step in fatty acid metabolism. Capable of activating medium-chain fatty acids with a preference for isobutyrate among fatty acids with 2-6 carbon atoms. This chain is Acyl-coenzyme A synthetase ACSM3, mitochondrial (Acsm3), found in Mus musculus (Mouse).